We begin with the raw amino-acid sequence, 173 residues long: Alpha-crystallin A chain (173 aa).

Methionine 1 is subject to N-acetylmethionine. The tract at residues 1-63 is required for complex formation with BFSP1 and BFSP2; the sequence is MDIAIQHPWF…RTVLDSGISE (63 aa). Glutamine 6 is subject to Deamidated glutamine; partial. Lysine 11 is a glycosylation site (N-linked (Glc) (glycation) lysine). A Phosphoserine modification is found at serine 45. Glutamine 50 is subject to Deamidated glutamine; partial. One can recognise a sHSP domain in the interval 52 to 162; it reads LFRTVLDSGI…GHSERAIPVS (111 aa). Lysine 70 is modified (N6-acetyllysine). A glycan (N-linked (Glc) (glycation) lysine) is linked at lysine 78. The residue at position 90 (glutamine 90) is a Deamidated glutamine; partial. Lysine 99 is subject to N6-acetyllysine. Histidine 100 serves as a coordination point for Zn(2+). The residue at position 101 (asparagine 101) is a Deamidated asparagine; partial. Zn(2+) contacts are provided by glutamate 102 and histidine 107. Position 122 is a phosphoserine (serine 122). Position 123 is a deamidated asparagine; partial (asparagine 123). The segment at 144 to 173 is disordered; the sequence is PKIPSGVDAGHSERAIPVSREEKPSSAPSS. A compositionally biased stretch (basic and acidic residues) spans 153-167; the sequence is GHSERAIPVSREEKP. Position 154 (histidine 154) interacts with Zn(2+). The interval 157-163 is important for oligomerization; sequence RAIPVSR. A glycan (O-linked (GlcNAc) serine) is linked at serine 162.

It belongs to the small heat shock protein (HSP20) family. In terms of assembly, heteromer composed of three CRYAA and one CRYAB subunits. Inter-subunit bridging via zinc ions enhances stability, which is crucial as there is no protein turn over in the lens. Can also form homodimers and homotetramers (dimers of dimers) which serve as the building blocks of homooligomers. Within homooligomers, the zinc-binding motif is created from residues of 3 different molecules. His-100 and Glu-102 from one molecule are ligands of the zinc ion, and His-107 and His-154 residues from additional molecules complete the site with tetrahedral coordination geometry. Part of a complex required for lens intermediate filament formation composed of BFSP1, BFSP2 and CRYAA. Acetylation at Lys-70 may increase chaperone activity. Post-translationally, undergoes age-dependent proteolytical cleavage at the C-terminus.

It localises to the cytoplasm. The protein localises to the nucleus. Its function is as follows. Contributes to the transparency and refractive index of the lens. Acts as a chaperone, preventing aggregation of various proteins under a wide range of stress conditions. Required for the correct formation of lens intermediate filaments as part of a complex composed of BFSP1, BFSP2 and CRYAA. The sequence is that of Alpha-crystallin A chain (CRYAA) from Bos taurus (Bovine).